The following is a 129-amino-acid chain: Ribosome-binding factor A (129 aa).

It belongs to the RbfA family. Monomer. Binds 30S ribosomal subunits, but not 50S ribosomal subunits or 70S ribosomes.

Its subcellular location is the cytoplasm. Functionally, one of several proteins that assist in the late maturation steps of the functional core of the 30S ribosomal subunit. Associates with free 30S ribosomal subunits (but not with 30S subunits that are part of 70S ribosomes or polysomes). Required for efficient processing of 16S rRNA. May interact with the 5'-terminal helix region of 16S rRNA. This Actinobacillus succinogenes (strain ATCC 55618 / DSM 22257 / CCUG 43843 / 130Z) protein is Ribosome-binding factor A.